We begin with the raw amino-acid sequence, 173 residues long: C-phycocyanin beta subunit (173 aa).

Asparagine 73 is modified (N4-methylasparagine). Residues cysteine 83 and cysteine 154 each contribute to the (2R,3E)-phycocyanobilin site.

Belongs to the phycobiliprotein family. Heterodimer of an alpha and a beta subunit. Part of 2 PBS rod complexes, the conventional PBS rod and a photosystem I-specific CpcL-PBS rod. Post-translationally, contains two covalently linked bilin chromophores.

It localises to the cellular thylakoid membrane. Its function is as follows. Light-harvesting photosynthetic bile pigment-protein from the phycobiliprotein complex (phycobilisome, PBS). Phycocyanin is the major phycobiliprotein in the PBS rod. In Nostoc sp. (strain PCC 7120 / SAG 25.82 / UTEX 2576), this protein is C-phycocyanin beta subunit (cpcB).